The following is a 354-amino-acid chain: Photosystem II D2 protein (354 aa).

An N-acetylthreonine modification is found at Thr2. Thr2 carries the phosphothreonine modification. Residues 42–62 traverse the membrane as a helical segment; sequence CAYFALGGFFTGNTFVTSWYT. A chlorophyll a-binding site is contributed by His119. Residues 126–142 form a helical membrane-spanning segment; it reads GFMLRQFEIARAVKIRP. Pheophytin a-binding residues include Gln131 and Asn144. A helical membrane pass occupies residues 154–167; the sequence is VFVSVFLIYPLGQQ. His199 contacts chlorophyll a. A helical membrane pass occupies residues 209–229; the sequence is AALLCAIHGATVENTLFEDGD. Residues His216 and Phe263 each coordinate a plastoquinone. His216 is a binding site for Fe cation. Fe cation is bound at residue His270. The helical transmembrane segment at 280–296 threads the bilayer; sequence GLWMSAIGVVGLALNLR.

This sequence belongs to the reaction center PufL/M/PsbA/D family. PSII is composed of 1 copy each of membrane proteins PsbA, PsbB, PsbC, PsbD, PsbE, PsbF, PsbH, PsbI, PsbJ, PsbK, PsbL, PsbM, PsbT, PsbX, PsbY, PsbZ, Psb30/Ycf12, at least 3 peripheral proteins of the oxygen-evolving complex and a large number of cofactors. It forms dimeric complexes. Requires The D1/D2 heterodimer binds P680, chlorophylls that are the primary electron donor of PSII, and subsequent electron acceptors. It shares a non-heme iron and each subunit binds pheophytin, quinone, additional chlorophylls, carotenoids and lipids. There is also a Cl(-1) ion associated with D1 and D2, which is required for oxygen evolution. The PSII complex binds additional chlorophylls, carotenoids and specific lipids. as cofactor.

Its subcellular location is the plastid. It is found in the chloroplast thylakoid membrane. It carries out the reaction 2 a plastoquinone + 4 hnu + 2 H2O = 2 a plastoquinol + O2. Its function is as follows. Photosystem II (PSII) is a light-driven water:plastoquinone oxidoreductase that uses light energy to abstract electrons from H(2)O, generating O(2) and a proton gradient subsequently used for ATP formation. It consists of a core antenna complex that captures photons, and an electron transfer chain that converts photonic excitation into a charge separation. The D1/D2 (PsbA/PsbD) reaction center heterodimer binds P680, the primary electron donor of PSII as well as several subsequent electron acceptors. D2 is needed for assembly of a stable PSII complex. The chain is Photosystem II D2 protein from Mesostigma viride (Green alga).